We begin with the raw amino-acid sequence, 179 residues long: Ribosome maturation factor RimM (179 aa).

Positions 102–179 (DGEYYWYQLE…EMKVDWDADF (78 aa)) constitute a PRC barrel domain.

The protein belongs to the RimM family. Binds ribosomal protein uS19.

It is found in the cytoplasm. In terms of biological role, an accessory protein needed during the final step in the assembly of 30S ribosomal subunit, possibly for assembly of the head region. Essential for efficient processing of 16S rRNA. May be needed both before and after RbfA during the maturation of 16S rRNA. It has affinity for free ribosomal 30S subunits but not for 70S ribosomes. The sequence is that of Ribosome maturation factor RimM from Pseudomonas syringae pv. syringae (strain B728a).